Consider the following 87-residue polypeptide: Small ribosomal subunit protein bS20 (87 aa).

Positions 1 to 26 (MANIKSAQKRAVQSEKRRQHNASQRS) are disordered.

This sequence belongs to the bacterial ribosomal protein bS20 family.

Functionally, binds directly to 16S ribosomal RNA. In Glaesserella parasuis serovar 5 (strain SH0165) (Haemophilus parasuis), this protein is Small ribosomal subunit protein bS20.